A 114-amino-acid chain; its full sequence is rRNA-processing protein cgrA (114 aa).

The span at 1 to 13 (MSSAAPAPSTHAA) shows a compositional bias: low complexity. Disordered stretches follow at residues 1–47 (MSSA…AARK) and 77–114 (RRAAKEEKERYEKMAEKMHRKRVERLKKREKRNKLLNS). Positions 40–101 (TKRAAARKEQ…EKMHRKRVER (62 aa)) form a coiled coil. Residues 77-93 (RRAAKEEKERYEKMAEK) show a composition bias toward basic and acidic residues. Residues 94–114 (MHRKRVERLKKREKRNKLLNS) are compositionally biased toward basic residues.

The protein belongs to the CGR1 family.

The protein localises to the nucleus. Its subcellular location is the nucleolus. In terms of biological role, involved in nucleolar integrity and required for processing of the pre-rRNA for the 60S ribosome subunit. The polypeptide is rRNA-processing protein cgrA (cgrA) (Emericella nidulans (strain FGSC A4 / ATCC 38163 / CBS 112.46 / NRRL 194 / M139) (Aspergillus nidulans)).